The sequence spans 133 residues: Small ribosomal subunit protein eS8 (133 aa).

Residues 1 to 22 form a disordered region; sequence MGFYQGPDNRKITGGLKGKHRD.

It belongs to the eukaryotic ribosomal protein eS8 family. In terms of assembly, part of the 30S ribosomal subunit.

This Saccharolobus islandicus (strain M.14.25 / Kamchatka #1) (Sulfolobus islandicus) protein is Small ribosomal subunit protein eS8.